The following is a 168-amino-acid chain: Photosystem I assembly protein Ycf3 (168 aa).

TPR repeat units lie at residues 35-68, 72-105, and 120-153; these read AFTY…EIDP, SYIL…NPFL, and GEKA…TPGN.

It belongs to the Ycf3 family.

It localises to the plastid membrane. Essential for the assembly of the photosystem I (PSI) complex. May act as a chaperone-like factor to guide the assembly of the PSI subunits. The polypeptide is Photosystem I assembly protein Ycf3 (Cuscuta exaltata (Tall dodder)).